Here is a 127-residue protein sequence, read N- to C-terminus: Large ribosomal subunit protein uL22 (127 aa).

Part of the 50S ribosomal subunit.

Functionally, this protein binds specifically to 23S rRNA; its binding is stimulated by other ribosomal proteins, e.g. L4, L17, and L20. It is important during the early stages of 50S assembly. It makes multiple contacts with different domains of the 23S rRNA in the assembled 50S subunit and ribosome. Its function is as follows. The globular domain of the protein is located near the polypeptide exit tunnel on the outside of the subunit, while an extended beta-hairpin is found that lines the wall of the exit tunnel in the center of the 70S ribosome. The sequence is that of Large ribosomal subunit protein uL22 from Rhodopseudomonas palustris (strain ATCC BAA-98 / CGA009).